Consider the following 211-residue polypeptide: Probable nicotinate-nucleotide adenylyltransferase (211 aa).

Belongs to the NadD family.

The catalysed reaction is nicotinate beta-D-ribonucleotide + ATP + H(+) = deamido-NAD(+) + diphosphate. It functions in the pathway cofactor biosynthesis; NAD(+) biosynthesis; deamido-NAD(+) from nicotinate D-ribonucleotide: step 1/1. Functionally, catalyzes the reversible adenylation of nicotinate mononucleotide (NaMN) to nicotinic acid adenine dinucleotide (NaAD). The sequence is that of Probable nicotinate-nucleotide adenylyltransferase from Thermoanaerobacter sp. (strain X514).